A 598-amino-acid chain; its full sequence is NADH-quinone oxidoreductase subunit C/D (598 aa).

Positions 1–190 (MSIFTQEVSA…EAFSLDDERL (190 aa)) are NADH dehydrogenase I subunit C. Residues 214–598 (DYLFLNLGPN…IDFVMADVDR (385 aa)) are NADH dehydrogenase I subunit D.

This sequence in the N-terminal section; belongs to the complex I 30 kDa subunit family. The protein in the C-terminal section; belongs to the complex I 49 kDa subunit family. In terms of assembly, NDH-1 is composed of 13 different subunits. Subunits NuoB, CD, E, F, and G constitute the peripheral sector of the complex.

It localises to the cell inner membrane. The catalysed reaction is a quinone + NADH + 5 H(+)(in) = a quinol + NAD(+) + 4 H(+)(out). In terms of biological role, NDH-1 shuttles electrons from NADH, via FMN and iron-sulfur (Fe-S) centers, to quinones in the respiratory chain. The immediate electron acceptor for the enzyme in this species is believed to be ubiquinone. Couples the redox reaction to proton translocation (for every two electrons transferred, four hydrogen ions are translocated across the cytoplasmic membrane), and thus conserves the redox energy in a proton gradient. This chain is NADH-quinone oxidoreductase subunit C/D, found in Shewanella woodyi (strain ATCC 51908 / MS32).